A 343-amino-acid chain; its full sequence is Glutamine synthetase (343 aa).

Residues 3 to 87 (FKAEYIWIDG…CEVLNIDLTP (85 aa)) enclose the GS beta-grasp domain. Residues 92–343 (TRAALAEVAE…CSALEKAGQV (252 aa)) form the GS catalytic domain. Mg(2+)-binding residues include Glu-113, Glu-115, Glu-174, and Glu-181. Glu-279 provides a ligand contact to L-glutamate.

It belongs to the glutamine synthetase family. As to quaternary structure, homooctamer and homotetramer. Mg(2+) serves as cofactor.

Its subcellular location is the cytoplasm. It catalyses the reaction L-glutamate + NH4(+) + ATP = L-glutamine + ADP + phosphate + H(+). Catalyzes the ATP-dependent biosynthesis of glutamine from glutamate and ammonia. This Streptomyces viridochromogenes protein is Glutamine synthetase.